The following is a 275-amino-acid chain: Diaminopimelate epimerase (275 aa).

Residues N13, Q46, and N66 each contribute to the substrate site. Catalysis depends on C75, which acts as the Proton donor. Substrate is bound by residues 76–77 (GN), N159, N192, and 210–211 (ER). The Proton acceptor role is filled by C219. 220–221 (GS) is a substrate binding site.

This sequence belongs to the diaminopimelate epimerase family. As to quaternary structure, homodimer.

It localises to the cytoplasm. It carries out the reaction (2S,6S)-2,6-diaminopimelate = meso-2,6-diaminopimelate. Its pathway is amino-acid biosynthesis; L-lysine biosynthesis via DAP pathway; DL-2,6-diaminopimelate from LL-2,6-diaminopimelate: step 1/1. In terms of biological role, catalyzes the stereoinversion of LL-2,6-diaminopimelate (L,L-DAP) to meso-diaminopimelate (meso-DAP), a precursor of L-lysine and an essential component of the bacterial peptidoglycan. The sequence is that of Diaminopimelate epimerase from Idiomarina loihiensis (strain ATCC BAA-735 / DSM 15497 / L2-TR).